The primary structure comprises 145 residues: Large-conductance mechanosensitive channel (145 aa).

The next 3 helical transmembrane spans lie at 14–34 (VMDL…VKSL), 38–58 (LIMP…YFLP), and 81–101 (GSFL…FLMV).

Belongs to the MscL family. As to quaternary structure, homopentamer.

It is found in the cell inner membrane. Functionally, channel that opens in response to stretch forces in the membrane lipid bilayer. May participate in the regulation of osmotic pressure changes within the cell. The polypeptide is Large-conductance mechanosensitive channel (Rhizobium leguminosarum bv. trifolii (strain WSM2304)).